We begin with the raw amino-acid sequence, 250 residues long: ATP synthase subunit a (250 aa).

A run of 5 helical transmembrane segments spans residues 27-47, 83-103, 129-149, 191-211, and 219-239; these read TDTV…AFYL, IAPF…ISNW, INYV…AGIW, IFAG…IMWA, and FDLF…ILYF.

It belongs to the ATPase A chain family. As to quaternary structure, F-type ATPases have 2 components, CF(1) - the catalytic core - and CF(0) - the membrane proton channel. CF(1) has five subunits: alpha(3), beta(3), gamma(1), delta(1), epsilon(1). CF(0) has three main subunits: a(1), b(2) and c(9-12). The alpha and beta chains form an alternating ring which encloses part of the gamma chain. CF(1) is attached to CF(0) by a central stalk formed by the gamma and epsilon chains, while a peripheral stalk is formed by the delta and b chains.

The protein localises to the cell membrane. Functionally, key component of the proton channel; it plays a direct role in the translocation of protons across the membrane. This Mycobacterium marinum (strain ATCC BAA-535 / M) protein is ATP synthase subunit a.